A 227-amino-acid polypeptide reads, in one-letter code: 7-cyano-7-deazaguanine synthase (227 aa).

An ATP-binding site is contributed by 9–19 (LSGGLDSATVL). 4 residues coordinate Zn(2+): cysteine 189, cysteine 199, cysteine 202, and cysteine 205.

It belongs to the QueC family. It depends on Zn(2+) as a cofactor.

The catalysed reaction is 7-carboxy-7-deazaguanine + NH4(+) + ATP = 7-cyano-7-deazaguanine + ADP + phosphate + H2O + H(+). It functions in the pathway purine metabolism; 7-cyano-7-deazaguanine biosynthesis. Catalyzes the ATP-dependent conversion of 7-carboxy-7-deazaguanine (CDG) to 7-cyano-7-deazaguanine (preQ(0)). The polypeptide is 7-cyano-7-deazaguanine synthase (Cupriavidus necator (strain ATCC 17699 / DSM 428 / KCTC 22496 / NCIMB 10442 / H16 / Stanier 337) (Ralstonia eutropha)).